We begin with the raw amino-acid sequence, 104 residues long: DNA-directed RNA polymerase subunit omega (104 aa).

It belongs to the RNA polymerase subunit omega family. As to quaternary structure, the RNAP catalytic core consists of 2 alpha, 1 beta, 1 beta' and 1 omega subunit. When a sigma factor is associated with the core the holoenzyme is formed, which can initiate transcription.

The enzyme catalyses RNA(n) + a ribonucleoside 5'-triphosphate = RNA(n+1) + diphosphate. In terms of biological role, promotes RNA polymerase assembly. Latches the N- and C-terminal regions of the beta' subunit thereby facilitating its interaction with the beta and alpha subunits. The sequence is that of DNA-directed RNA polymerase subunit omega from Streptococcus agalactiae serotype Ia (strain ATCC 27591 / A909 / CDC SS700).